We begin with the raw amino-acid sequence, 644 residues long: Neurofilament medium polypeptide (644 aa).

Residues 1 to 33 form a coil 1B region; sequence VKVELDKKVQSLQDEVAFLRTNHEEEVADLLAQ. An IF rod domain is found at 1–197; it reads VKVELDKKVQ…KLLEGEETRF (197 aa). Ser-11 bears the Phosphoserine mark. The linker 12 stretch occupies residues 34-50; the sequence is IQASHITVERKDYLKTD. The coil 2A stretch occupies residues 51-72; it reads ISSALKEIRSQLECHSDQNMHQ. Positions 73–76 are linker 2; sequence AEEW. Residues 77 to 197 form a coil 2B region; it reads FKCRYAKLTE…KLLEGEETRF (121 aa). A Phosphotyrosine modification is found at Tyr-105. A phosphoserine mark is found at Ser-131, Ser-203, and Ser-215. Residues 198 to 643 are tail; it reads STFSGSITGP…HAIVKEVTQS (446 aa). Residue Thr-217 is glycosylated (O-linked (GlcNAc) threonine). Phosphoserine is present on residues Ser-253 and Ser-269. The segment at 270–582 is disordered; it reads VKEEEKEEEA…GGDRSEEKVV (313 aa). The segment covering 274–292 has biased composition (acidic residues); it reads EKEEEAEGKEEEQEAEEEV. Ser-298 is modified (phosphoserine). The segment covering 308-328 has biased composition (acidic residues); sequence KEEEGEKEEEGQEEEEEEEDE. The span at 329-350 shows a compositional bias: basic and acidic residues; sequence GVKSDQAEEGGSEKEGSSKNEG. Phosphoserine occurs at positions 332, 340, 345, and 346. Positions 351–368 are enriched in acidic residues; that stretch reads EQEEGETEAEGEVEEAEA. Thr-357 is modified (phosphothreonine). Positions 369-400 are enriched in basic and acidic residues; that stretch reads KEEKKTEEKSEEVAAKEEPVTEAKVGKPEKAK. Residues Ser-401, Ser-406, Ser-442, and Ser-465 each carry the phosphoserine modification. A compositionally biased stretch (basic and acidic residues) spans 422-470; sequence GEQKEEEEKVEEEKKKAAKESPKEEKVEKKEEKPKDVPKKKAESPVKEE. Residues 474–483 are compositionally biased toward low complexity; that stretch reads EAATITKPTK. The segment covering 485 to 508 has biased composition (basic and acidic residues); that stretch reads GLEKETKEGEKPLQQEKEKEKAGE. A phosphoserine mark is found at Ser-512, Ser-550, and Ser-566. Basic and acidic residues predominate over residues 545 to 557; the sequence is TKEKGSGREEEKG. A compositionally biased stretch (basic and acidic residues) spans 568–582; that stretch reads ADEKKGGDRSEEKVV.

It belongs to the intermediate filament family. As to quaternary structure, forms heterodimers with NEFL; which can further hetero-oligomerize (in vitro). Forms heterodimers with INA (in vitro). There are a number of repeats of the tripeptide K-S-P, NFM is phosphorylated on a number of the serines in this motif. It is thought that phosphorylation of NFM results in the formation of interfilament cross bridges that are important in the maintenance of axonal caliber. Post-translationally, phosphorylation seems to play a major role in the functioning of the larger neurofilament polypeptides (NF-M and NF-H), the levels of phosphorylation being altered developmentally and coincidentally with a change in the neurofilament function. In terms of processing, phosphorylated in the head and rod regions by the PKC kinase PKN1, leading to the inhibition of polymerization.

Its subcellular location is the cytoplasm. It is found in the cytoskeleton. The protein localises to the cell projection. The protein resides in the axon. Neurofilaments usually contain three intermediate filament proteins: NEFL, NEFM, and NEFH which are involved in the maintenance of neuronal caliber. May additionally cooperate with the neuronal intermediate filament proteins PRPH and INA to form neuronal filamentous networks. This is Neurofilament medium polypeptide (NEFM) from Oryctolagus cuniculus (Rabbit).